A 97-amino-acid chain; its full sequence is Cell division topological specificity factor (97 aa).

Belongs to the MinE family.

Prevents the cell division inhibition by proteins MinC and MinD at internal division sites while permitting inhibition at polar sites. This ensures cell division at the proper site by restricting the formation of a division septum at the midpoint of the long axis of the cell. This chain is Cell division topological specificity factor, found in Synechococcus sp. (strain RCC307).